A 362-amino-acid polypeptide reads, in one-letter code: Endopolygalacturonase II (362 aa).

An N-terminal signal peptide occupies residues 1–21 (MHSFASLLAYGLVAGATFASA). Residues 22–27 (SPIEAR) constitute a propeptide that is removed on maturation. A disulfide bridge connects residues C30 and C45. The stretch at 156 to 186 (ANDITFTDVTINNADGDTQGGHNTDAFDVGN) is one PbH1 1 repeat. The active-site Proton donor is the D201. A disulfide bond links C203 and C219. PbH1 repeat units lie at residues 209-229 (GENI…SIGS), 238-259 (VKNV…RIKT), 267-289 (VSEI…VIQQ), and 301-322 (TNGV…DSGA). H223 is an active-site residue. A glycan (N-linked (GlcNAc...) (high mannose) asparagine) is linked at N240. Disulfide bonds link C329–C334 and C353–C362.

This sequence belongs to the glycosyl hydrolase 28 family.

It localises to the secreted. The enzyme catalyses (1,4-alpha-D-galacturonosyl)n+m + H2O = (1,4-alpha-D-galacturonosyl)n + (1,4-alpha-D-galacturonosyl)m.. Functionally, involved in maceration and soft-rotting of plant tissue. Hydrolyzes the 1,4-alpha glycosidic bonds of de-esterified pectate in the smooth region of the plant cell wall. This Aspergillus niger (strain ATCC 1015 / CBS 113.46 / FGSC A1144 / LSHB Ac4 / NCTC 3858a / NRRL 328 / USDA 3528.7) protein is Endopolygalacturonase II (pgaII).